The following is a 183-amino-acid chain: Hypoxanthine/guanine phosphoribosyltransferase (183 aa).

The protein belongs to the purine/pyrimidine phosphoribosyltransferase family. Archaeal HPRT subfamily. As to quaternary structure, homodimer.

It is found in the cytoplasm. It catalyses the reaction IMP + diphosphate = hypoxanthine + 5-phospho-alpha-D-ribose 1-diphosphate. The enzyme catalyses GMP + diphosphate = guanine + 5-phospho-alpha-D-ribose 1-diphosphate. Its pathway is purine metabolism; IMP biosynthesis via salvage pathway; IMP from hypoxanthine: step 1/1. Catalyzes a salvage reaction resulting in the formation of IMP that is energically less costly than de novo synthesis. In Methanocaldococcus jannaschii (strain ATCC 43067 / DSM 2661 / JAL-1 / JCM 10045 / NBRC 100440) (Methanococcus jannaschii), this protein is Hypoxanthine/guanine phosphoribosyltransferase.